The following is a 151-amino-acid chain: uncharacterized protein (151 aa).

Residues 1 to 151 form a disordered region; that stretch reads MAELASIIRP…SSKTTTLKAR (151 aa). Low complexity predominate over residues 33 to 45; that stretch reads STGLSDLLMLLQS. The segment covering 53–64 has biased composition (basic residues); the sequence is RARRRTVCRPRR. Residues 108-123 are compositionally biased toward low complexity; it reads SSSSNTSSGTATSGES. Residues 126–141 are compositionally biased toward basic and acidic residues; sequence ADWRDSSSASDDDRIP.

This is an uncharacterized protein from Aotus trivirgatus (Three-striped night monkey).